We begin with the raw amino-acid sequence, 129 residues long: Small ribosomal subunit protein uS9 (129 aa).

This sequence belongs to the universal ribosomal protein uS9 family.

In Helicobacter pylori (strain J99 / ATCC 700824) (Campylobacter pylori J99), this protein is Small ribosomal subunit protein uS9 (rpsI).